An 834-amino-acid chain; its full sequence is Pentatricopeptide repeat-containing protein At4g39530 (834 aa).

19 PPR repeats span residues 78 to 112 (DTYL…NLVS), 113 to 144 (WSTM…KDSP), 145 to 181 (NEYI…GFDR), 182 to 212 (DVYV…LPEK), 213 to 247 (STVT…NVVP), 248 to 282 (DGYI…GLEM), 283 to 313 (DASL…MPNK), 314 to 348 (NIIS…GLKP), 349 to 383 (DMYA…NLGN), 384 to 414 (DSYV…FAAA), 415 to 452 (DVVL…LIRP), 453 to 487 (SLLT…GLNL), 488 to 518 (DIFA…MKVK), 519 to 553 (DLVI…RERP), 554 to 588 (DEFT…GLEC), 589 to 619 (NPYI…AASR), 620 to 654 (DVVC…GIEP), 655 to 689 (NYIT…GIEP), and 690 to 720 (ETEH…MPTK). Positions 725-800 (VWRSLLSGCA…EPGRSWIGIN (76 aa)) are type E motif. The tract at residues 801–831 (KEVHIFLSKDKSHCKANQIYEVLDDLLVQIR) is type E(+) motif.

Belongs to the PPR family. PCMP-E subfamily.

This Arabidopsis thaliana (Mouse-ear cress) protein is Pentatricopeptide repeat-containing protein At4g39530 (PCMP-E52).